The sequence spans 721 residues: Transcription activator of gluconeogenesis ARB_05058 (721 aa).

The segment covering 1–34 (MSPHQTTGQESDNMTVNGENAQASSQYIQSNEEM) has biased composition (polar residues). A disordered region spans residues 1 to 62 (MSPHQTTGQE…PSRPKRKKAK (62 aa)). Basic and acidic residues predominate over residues 40–55 (TEKKASTAKAAKDPSR). Residues 65 to 93 (CYACQRGHLTCGDERPCQRCIKRGFQDAC) constitute a DNA-binding region (zn(2)-C6 fungal-type). Disordered regions lie at residues 128 to 224 (QNNA…FNSA), 263 to 300 (GDTP…SNQA), 353 to 400 (SPAS…TPQL), 533 to 567 (NHNV…YNSS), and 635 to 666 (GLNG…QRRW). Composition is skewed to polar residues over residues 133-213 (GSNT…TPSA), 267-277 (PSESGAQRGSI), 287-300 (LTGS…SNQA), and 361-379 (MMTT…GAFN). Low complexity-rich tracts occupy residues 380–399 (SRQN…STPQ) and 543–553 (GLMTGSTSRGS). Positions 640 to 661 (AASNETNELNGSLTNGATTNGR) are enriched in polar residues.

It belongs to the ERT1/acuK family.

Its subcellular location is the nucleus. In terms of biological role, transcription factor which regulates nonfermentable carbon utilization. Activator of gluconeogenetic genes. The sequence is that of Transcription activator of gluconeogenesis ARB_05058 from Arthroderma benhamiae (strain ATCC MYA-4681 / CBS 112371) (Trichophyton mentagrophytes).